The chain runs to 67 residues: Conotoxin TsMMSK-011 (67 aa).

Residues Met1–Ala20 form the signal peptide. A propeptide spanning residues Val21 to Val50 is cleaved from the precursor. Cystine bridges form between Cys53-Cys65, Cys54-Cys61, and Cys58-Cys64. Pro63 is modified (4-hydroxyproline).

It belongs to the conotoxin M superfamily. As to expression, expressed by the venom duct.

Its subcellular location is the secreted. This chain is Conotoxin TsMMSK-011, found in Conus tessulatus (Tessellate cone).